We begin with the raw amino-acid sequence, 319 residues long: NADH-quinone oxidoreductase subunit H 1 (319 aa).

A run of 9 helical transmembrane segments spans residues 5-25 (ILTA…AGVF), 78-98 (LAPA…AFGE), 109-129 (VMFL…GALA), 147-167 (LAYE…AGSL), 179-199 (VWFI…GIAA), 214-234 (LVGG…FLGE), 238-258 (ILLV…GPWL), 262-282 (IWFG…RAAL), and 294-314 (AWKV…FIVV).

It belongs to the complex I subunit 1 family. NDH-1 is composed of 14 different subunits. Subunits NuoA, H, J, K, L, M, N constitute the membrane sector of the complex.

The protein localises to the cell inner membrane. The enzyme catalyses a quinone + NADH + 5 H(+)(in) = a quinol + NAD(+) + 4 H(+)(out). In terms of biological role, NDH-1 shuttles electrons from NADH, via FMN and iron-sulfur (Fe-S) centers, to quinones in the respiratory chain. The immediate electron acceptor for the enzyme in this species is believed to be ubiquinone. Couples the redox reaction to proton translocation (for every two electrons transferred, four hydrogen ions are translocated across the cytoplasmic membrane), and thus conserves the redox energy in a proton gradient. This subunit may bind ubiquinone. The polypeptide is NADH-quinone oxidoreductase subunit H 1 (Rhodopseudomonas palustris (strain BisA53)).